The chain runs to 198 residues: ATP synthase subunit b (198 aa).

A helical membrane pass occupies residues isoleucine 49 to glycine 67.

The protein belongs to the ATPase B chain family. As to quaternary structure, F-type ATPases have 2 components, F(1) - the catalytic core - and F(0) - the membrane proton channel. F(1) has five subunits: alpha(3), beta(3), gamma(1), delta(1), epsilon(1). F(0) has three main subunits: a(1), b(2) and c(10-14). The alpha and beta chains form an alternating ring which encloses part of the gamma chain. F(1) is attached to F(0) by a central stalk formed by the gamma and epsilon chains, while a peripheral stalk is formed by the delta and b chains.

Its subcellular location is the cell inner membrane. Its function is as follows. F(1)F(0) ATP synthase produces ATP from ADP in the presence of a proton or sodium gradient. F-type ATPases consist of two structural domains, F(1) containing the extramembraneous catalytic core and F(0) containing the membrane proton channel, linked together by a central stalk and a peripheral stalk. During catalysis, ATP synthesis in the catalytic domain of F(1) is coupled via a rotary mechanism of the central stalk subunits to proton translocation. Component of the F(0) channel, it forms part of the peripheral stalk, linking F(1) to F(0). The protein is ATP synthase subunit b of Solibacter usitatus (strain Ellin6076).